A 249-amino-acid polypeptide reads, in one-letter code: Coproheme decarboxylase (249 aa).

Residues arginine 131, 145 to 149 (YPMNK), histidine 172, and glutamine 185 each bind Fe-coproporphyrin III. The active site involves tyrosine 145.

The protein belongs to the ChdC family. Type 1 subfamily. Fe-coproporphyrin III is required as a cofactor.

It catalyses the reaction Fe-coproporphyrin III + 2 H2O2 + 2 H(+) = heme b + 2 CO2 + 4 H2O. It carries out the reaction Fe-coproporphyrin III + H2O2 + H(+) = harderoheme III + CO2 + 2 H2O. The enzyme catalyses harderoheme III + H2O2 + H(+) = heme b + CO2 + 2 H2O. It participates in porphyrin-containing compound metabolism; protoheme biosynthesis. Involved in coproporphyrin-dependent heme b biosynthesis. Catalyzes the decarboxylation of Fe-coproporphyrin III (coproheme) to heme b (protoheme IX), the last step of the pathway. The reaction occurs in a stepwise manner with a three-propionate intermediate. In Staphylococcus carnosus (strain TM300), this protein is Coproheme decarboxylase.